A 179-amino-acid chain; its full sequence is Large ribosomal subunit protein uL5 (179 aa).

This sequence belongs to the universal ribosomal protein uL5 family. In terms of assembly, part of the 50S ribosomal subunit; part of the 5S rRNA/L5/L18/L25 subcomplex. Contacts the 5S rRNA and the P site tRNA. Forms a bridge to the 30S subunit in the 70S ribosome.

Its function is as follows. This is one of the proteins that bind and probably mediate the attachment of the 5S RNA into the large ribosomal subunit, where it forms part of the central protuberance. In the 70S ribosome it contacts protein S13 of the 30S subunit (bridge B1b), connecting the 2 subunits; this bridge is implicated in subunit movement. Contacts the P site tRNA; the 5S rRNA and some of its associated proteins might help stabilize positioning of ribosome-bound tRNAs. The protein is Large ribosomal subunit protein uL5 of Caldanaerobacter subterraneus subsp. tengcongensis (strain DSM 15242 / JCM 11007 / NBRC 100824 / MB4) (Thermoanaerobacter tengcongensis).